A 669-amino-acid chain; its full sequence is MSKEIAKKRIEELRDLLNTFNYQYHVLDNPSVSDAEYDRNMQELIKLEAENPEFMSEDSPSIRVGGTVLDIFEKVTHKSPMLSLGNAFNEGDLRDFDRRVRQGIDDANVRYICELKIDGLAVSLHYEKGRFIQGATRGDGVTGEDITQNLKTIKAIPLRLNEEVTLEARGEAYMPKRSFVKLNEEKEQNGEDVFANPRNAAAGSIRQLDPKIAAKRNLSMFVYGLANVEEKTIPSHSESLDYLGELGFKTNPNRRTCETIEEVIAYVEEWQEKRPHLDYEIDGIVIKVDDVALQESLGTTAKSPRWAIAYKFPAEEVVTRLTGIELSVGRTGVVTPTAELEPVRVAGTIVRRASLHNEDLIREKDIRIGDYVVVKKAGDIIPEVINVIFDKRTGGEEEYHMPTHCPACESELVRLEEEVALRCINPTCPAQIREGLIHFVSRNAMNIDGLGERVITQLFDADYIRTFADLYSLTKEQLLQLERFGEKSATNLVQAIENSKENSLERLLFGLGIRHVGAKAARTFAEHFETMDALVKATEEELKAINEIGEKMAQSVVAYFDNEDVLELLQQFKEYGVNMTYKGIKIADLQNVESYFAGKTVVLTGKLEVMGRSEAKKKIEALGGKVTGSVSKSTDLVVAGEAAGSKLAQAEKHNVEVWNEERFLQELNK.

NAD(+)-binding positions include 34-38, 83-84, and E114; these read DAEYD and SL. K116 functions as the N6-AMP-lysine intermediate in the catalytic mechanism. 4 residues coordinate NAD(+): R137, E171, K287, and K311. Residues C405, C408, C423, and C428 each contribute to the Zn(2+) site. The BRCT domain maps to 591–669; it reads NVESYFAGKT…EERFLQELNK (79 aa).

It belongs to the NAD-dependent DNA ligase family. LigA subfamily. Mg(2+) is required as a cofactor. The cofactor is Mn(2+).

It carries out the reaction NAD(+) + (deoxyribonucleotide)n-3'-hydroxyl + 5'-phospho-(deoxyribonucleotide)m = (deoxyribonucleotide)n+m + AMP + beta-nicotinamide D-nucleotide.. Its function is as follows. DNA ligase that catalyzes the formation of phosphodiester linkages between 5'-phosphoryl and 3'-hydroxyl groups in double-stranded DNA using NAD as a coenzyme and as the energy source for the reaction. It is essential for DNA replication and repair of damaged DNA. This chain is DNA ligase, found in Bacillus cereus (strain AH820).